A 388-amino-acid chain; its full sequence is Fibrinogen- and Ig-binding protein (388 aa).

The signal sequence occupies residues 1–41 (MSKTNPNKLYSLRKLKTGTASVAVDLTVLGTGLANTTDVKA). 4 D repeats span residues 288–293 (EKLEAE), 294–299 (AKALKE), 302–307 (AKQAEE), and 309–314 (AKLKAD). The interval 308-362 (LAKLKADKASGAQKPDTKPGNKEVPTRPSQTRTNTNKAPMAQTKRQLPSTGEETT) is disordered. Over residues 322-332 (PDTKPGNKEVP) the composition is skewed to basic and acidic residues. The segment covering 334-362 (RPSQTRTNTNKAPMAQTKRQLPSTGEETT) has biased composition (polar residues). An LPXTG sorting signal motif is present at residues 354 to 358 (LPSTG). Residue T357 is modified to Pentaglycyl murein peptidoglycan amidated threonine. A propeptide spans 358–388 (GEETTNPFFTAAALTVIASAGVLALKRKEEN) (removed by sortase).

The protein resides in the secreted. Its subcellular location is the cell wall. Its function is as follows. Binds IgG molecules of the Ig1, Ig2 and Ig4 subclasses, and also binds fibrinogen. This Streptococcus pyogenes protein is Fibrinogen- and Ig-binding protein (mrp4).